Here is a 421-residue protein sequence, read N- to C-terminus: Phosphatidate cytidylyltransferase 1 (421 aa).

At M1 the chain carries N-acetylmethionine. The span at M1 to T12 shows a compositional bias: polar residues. The disordered stretch occupies residues M1–V26. A run of 8 helical transmembrane segments spans residues I60–V80, L102–G122, Y149–L169, W183–F203, I206–F226, G246–G266, L321–F341, and V369–V389.

It belongs to the CDS family. It depends on Mg(2+) as a cofactor.

It is found in the membrane. The enzyme catalyses a 1,2-diacyl-sn-glycero-3-phosphate + CTP + H(+) = a CDP-1,2-diacyl-sn-glycerol + diphosphate. It participates in phospholipid metabolism; CDP-diacylglycerol biosynthesis; CDP-diacylglycerol from sn-glycerol 3-phosphate: step 3/3. Functionally, may be involved in the synthesis of minor phospholipids and in modulation of IP3-mediated signal transduction. In Arabidopsis thaliana (Mouse-ear cress), this protein is Phosphatidate cytidylyltransferase 1.